A 162-amino-acid chain; its full sequence is MFDINWGSIIYQLIAFCVLLWLLSKFALKPLMGVMEKREQMINDQIDQADKDRKAAQEYLEQQRLAVEKAREEAQEIVQKAKKLSEQQGQEIVEAARAEGERLKEAALAEIQREKEQAVASLREQVASLSVLIATKVIEKELDEKEQEKLIAEYLKEVGEEL.

Residues 4 to 24 (INWGSIIYQLIAFCVLLWLLS) form a helical membrane-spanning segment.

Belongs to the ATPase B chain family. In terms of assembly, F-type ATPases have 2 components, F(1) - the catalytic core - and F(0) - the membrane proton channel. F(1) has five subunits: alpha(3), beta(3), gamma(1), delta(1), epsilon(1). F(0) has three main subunits: a(1), b(2) and c(10-14). The alpha and beta chains form an alternating ring which encloses part of the gamma chain. F(1) is attached to F(0) by a central stalk formed by the gamma and epsilon chains, while a peripheral stalk is formed by the delta and b chains.

Its subcellular location is the cell membrane. In terms of biological role, f(1)F(0) ATP synthase produces ATP from ADP in the presence of a proton or sodium gradient. F-type ATPases consist of two structural domains, F(1) containing the extramembraneous catalytic core and F(0) containing the membrane proton channel, linked together by a central stalk and a peripheral stalk. During catalysis, ATP synthesis in the catalytic domain of F(1) is coupled via a rotary mechanism of the central stalk subunits to proton translocation. Its function is as follows. Component of the F(0) channel, it forms part of the peripheral stalk, linking F(1) to F(0). This is ATP synthase subunit b from Halalkalibacterium halodurans (strain ATCC BAA-125 / DSM 18197 / FERM 7344 / JCM 9153 / C-125) (Bacillus halodurans).